The sequence spans 172 residues: S-ribosylhomocysteine lyase (172 aa).

Fe cation-binding residues include His54, His58, and Cys128.

Belongs to the LuxS family. As to quaternary structure, homodimer. Fe cation serves as cofactor.

The catalysed reaction is S-(5-deoxy-D-ribos-5-yl)-L-homocysteine = (S)-4,5-dihydroxypentane-2,3-dione + L-homocysteine. Involved in the synthesis of autoinducer 2 (AI-2) which is secreted by bacteria and is used to communicate both the cell density and the metabolic potential of the environment. The regulation of gene expression in response to changes in cell density is called quorum sensing. Catalyzes the transformation of S-ribosylhomocysteine (RHC) to homocysteine (HC) and 4,5-dihydroxy-2,3-pentadione (DPD). This is S-ribosylhomocysteine lyase from Vibrio cholerae serotype O1 (strain ATCC 39541 / Classical Ogawa 395 / O395).